The sequence spans 176 residues: Probable Brix domain-containing ribosomal biogenesis protein (176 aa).

Residues I6 to N176 enclose the Brix domain.

In terms of biological role, probably involved in the biogenesis of the ribosome. This Sulfurisphaera tokodaii (strain DSM 16993 / JCM 10545 / NBRC 100140 / 7) (Sulfolobus tokodaii) protein is Probable Brix domain-containing ribosomal biogenesis protein.